The sequence spans 43 residues: MEPATVLSIAIGSILLVITGFAIYTAFGPPSAQLSDPFEDHED.

A helical membrane pass occupies residues 7 to 27; that stretch reads LSIAIGSILLVITGFAIYTAF.

This sequence belongs to the PsbN family.

Its subcellular location is the cellular thylakoid membrane. Its function is as follows. May play a role in photosystem I and II biogenesis. This is Protein PsbN from Crocosphaera subtropica (strain ATCC 51142 / BH68) (Cyanothece sp. (strain ATCC 51142)).